We begin with the raw amino-acid sequence, 170 residues long: Protein-export protein SecB (170 aa).

This sequence belongs to the SecB family. Homotetramer, a dimer of dimers. One homotetramer interacts with 1 SecA dimer.

Its subcellular location is the cytoplasm. Functionally, one of the proteins required for the normal export of preproteins out of the cell cytoplasm. It is a molecular chaperone that binds to a subset of precursor proteins, maintaining them in a translocation-competent state. It also specifically binds to its receptor SecA. This is Protein-export protein SecB from Xanthomonas axonopodis pv. citri (strain 306).